The primary structure comprises 556 residues: Formate--tetrahydrofolate ligase (556 aa).

65 to 72 (TPAGEGKS) provides a ligand contact to ATP.

This sequence belongs to the formate--tetrahydrofolate ligase family.

The catalysed reaction is (6S)-5,6,7,8-tetrahydrofolate + formate + ATP = (6R)-10-formyltetrahydrofolate + ADP + phosphate. The protein operates within one-carbon metabolism; tetrahydrofolate interconversion. This chain is Formate--tetrahydrofolate ligase, found in Natranaerobius thermophilus (strain ATCC BAA-1301 / DSM 18059 / JW/NM-WN-LF).